The chain runs to 79 residues: Acyl carrier protein (79 aa).

The Carrier domain maps to 2-79 (ASKEEILAGL…QDAVDFIXGA (78 aa)). S40 bears the O-(pantetheine 4'-phosphoryl)serine mark.

It belongs to the acyl carrier protein (ACP) family. Post-translationally, 4'-phosphopantetheine is transferred from CoA to a specific serine of apo-ACP by AcpS. This modification is essential for activity because fatty acids are bound in thioester linkage to the sulfhydryl of the prosthetic group.

It localises to the cytoplasm. It participates in lipid metabolism; fatty acid biosynthesis. Its function is as follows. Carrier of the growing fatty acid chain in fatty acid biosynthesis. This is Acyl carrier protein from Myxococcus xanthus.